Reading from the N-terminus, the 68-residue chain is Lipopolysaccharide export system ATP-binding protein LptB (68 aa).

It belongs to the ABC transporter superfamily. Outer membrane lipopolysaccharide export (TC 1.B.42) family. In terms of assembly, component of the lipopolysaccharide transport and assembly complex. The LptBFG transporter is composed of two ATP-binding proteins (LptB) and two transmembrane proteins (LptF and LptG).

It localises to the cytoplasm. Its subcellular location is the cell inner membrane. In terms of biological role, part of the ABC transporter complex LptBFG involved in the translocation of lipopolysaccharide (LPS) from the inner membrane to the outer membrane. Probably responsible for energy coupling to the transport system. In Klebsiella oxytoca, this protein is Lipopolysaccharide export system ATP-binding protein LptB (lptB).